The sequence spans 363 residues: Heme A synthase (363 aa).

The next 8 helical transmembrane spans lie at Ala21–Gly41, Arg107–Ser127, Leu138–Ser158, His174–Pro194, Leu207–Gly227, Phe268–Thr288, Ala301–Met321, and Val323–Ala343. His270 lines the heme pocket. His331 serves as a coordination point for heme.

The protein belongs to the COX15/CtaA family. Type 2 subfamily. Interacts with CtaB. The cofactor is heme b.

The protein resides in the cell membrane. The catalysed reaction is Fe(II)-heme o + 2 A + H2O = Fe(II)-heme a + 2 AH2. Its pathway is porphyrin-containing compound metabolism; heme A biosynthesis; heme A from heme O: step 1/1. Catalyzes the conversion of heme O to heme A by two successive hydroxylations of the methyl group at C8. The first hydroxylation forms heme I, the second hydroxylation results in an unstable dihydroxymethyl group, which spontaneously dehydrates, resulting in the formyl group of heme A. The polypeptide is Heme A synthase (Mesorhizobium japonicum (strain LMG 29417 / CECT 9101 / MAFF 303099) (Mesorhizobium loti (strain MAFF 303099))).